Reading from the N-terminus, the 296-residue chain is Endonuclease 5 (296 aa).

A signal peptide spans 1–20; it reads MRLWIVSVLVLTHLVHGALC. A divalent metal cation is bound by residues tryptophan 21 and histidine 26. 21–26 provides a ligand contact to substrate; sequence WGKDGH. Cysteine 30 and cysteine 62 are oxidised to a cystine. 2 residues coordinate a divalent metal cation: aspartate 66 and histidine 81. Residues 66–72, 81–84, and 91–96 each bind substrate; these read DEIKKLS, HYVN, and NYEYCR. 3 disulfides stabilise this stretch: cysteine 90–cysteine 243, cysteine 98–cysteine 108, and cysteine 223–cysteine 230. Positions 115 and 133 each coordinate substrate. N-linked (GlcNAc...) asparagine glycosylation is present at asparagine 115. Asparagine 134 is a glycosylation site (N-linked (GlcNAc...) asparagine). Histidine 144, aspartate 148, and histidine 154 together coordinate a divalent metal cation. A substrate binding region spans residues 144–193; that stretch reads HYMGDVHQPLHTGFLGDLGGNTIIVNWYHNKSNLHHVWDNMIIDSALETY. Asparagine 173 carries N-linked (GlcNAc...) asparagine glycosylation. Residues histidine 178 and aspartate 182 each contribute to the a divalent metal cation site. Asparagine 195 carries an N-linked (GlcNAc...) asparagine glycan. Residues 281–296 constitute a propeptide, removed in mature form; it reads ATLNRIFSAKPKLAGL.

It belongs to the nuclease type I family. As to quaternary structure, monomer. It depends on Zn(2+) as a cofactor.

It carries out the reaction Endonucleolytic cleavage to 5'-phosphomononucleotide and 5'-phosphooligonucleotide end-products.. Functionally, hydrolyzes, with low efficiency, only single-stranded DNA and RNA without apparent specificity for bases. Endonuclease that recognizes and cleaves some mismatches with high efficiency, including heteroduplex double-stranded DNA; mostly efficient on T/G, A/G and G/G mismatches, less efficient for T/T and poorly efficient for C/C, A/A, T/C and A/C. The polypeptide is Endonuclease 5 (Arabidopsis thaliana (Mouse-ear cress)).